The following is a 1550-amino-acid chain: DNA excision repair protein ERCC-6-like 2 (1550 aa).

The disordered stretch occupies residues 1-23 (MDPSAPQPRAETSGKDIWHPGER). Residues 12-22 (TSGKDIWHPGE) show a composition bias toward basic and acidic residues. A Helicase ATP-binding domain is found at 135–321 (YGHYIHGGGC…WCVMDWAVPG (187 aa)). Residue 148–155 (DDMGLGKT) coordinates ATP. Positions 272-275 (DEAH) match the DEAH box motif. The Helicase C-terminal domain maps to 512–662 (VLQQLLNHCR…CVVVGSENAK (151 aa)). Positions 785-796 (PGQLTLLQCGFS) match the Atypical PIP-box motif. Disordered regions lie at residues 808 to 848 (DSDG…TSKH), 914 to 1002 (FPDN…SSLR), and 1354 to 1410 (AETK…TRTG). Composition is skewed to basic and acidic residues over residues 830–840 (EAKDAGCEKNQ) and 933–953 (TEHT…DKRN). Phosphoserine is present on residues Ser-980 and Ser-983. Over residues 992–1002 (SRVRKRASSLR) the composition is skewed to basic residues. The segment covering 1359 to 1388 (SPVSSTQEIDSGKNSQASEDTVTSRSLNSE) has biased composition (polar residues). Ser-1373 and Ser-1376 each carry phosphoserine. Over residues 1389–1405 (SETRERRLENTMKDQQD) the composition is skewed to basic and acidic residues.

It belongs to the SNF2/RAD54 helicase family. In terms of assembly, interacts with NEK6. Interacts (via an atypical PIP-box) with PCNA; this interaction facilitates cenrtomeric localization of ERCC6L2. Interacts with CYREN; this interaction is DNA independent. Interacts with XRCC6 and XRCC5. In terms of processing, phosphorylated by NEK6. Expressed in bone marrow (at protein level).

It is found in the nucleus. The protein localises to the cytoplasm. The protein resides in the cytoskeleton. Its subcellular location is the microtubule organizing center. It localises to the centrosome. It is found in the mitochondrion. The protein localises to the chromosome. The protein resides in the centromere. Promotes double-strand break (DSB) end-joining and facilitates programmed recombination by controlling how DNA ends are joined in a spatially oriented manner during repair. Also plays a role in DNA repair by restricting DNA end resection in double strand break (DSB) repair. Facilitates replication of complex DNA regions and regulates the maintenance of chromatin structure. This Homo sapiens (Human) protein is DNA excision repair protein ERCC-6-like 2.